The following is a 502-amino-acid chain: Lysine--tRNA ligase (502 aa).

Mg(2+) is bound by residues E412 and E419.

The protein belongs to the class-II aminoacyl-tRNA synthetase family. Homodimer. It depends on Mg(2+) as a cofactor.

Its subcellular location is the cytoplasm. The enzyme catalyses tRNA(Lys) + L-lysine + ATP = L-lysyl-tRNA(Lys) + AMP + diphosphate. This chain is Lysine--tRNA ligase, found in Buchnera aphidicola subsp. Cinara cedri (strain Cc).